We begin with the raw amino-acid sequence, 91 residues long: Large ribosomal subunit protein eL31 (91 aa).

It belongs to the eukaryotic ribosomal protein eL31 family.

This is Large ribosomal subunit protein eL31 from Pyrobaculum calidifontis (strain DSM 21063 / JCM 11548 / VA1).